The primary structure comprises 193 residues: dCTP deaminase (193 aa).

Residues arginine 110–arginine 115, aspartate 128, valine 136–glutamate 138, tyrosine 171, lysine 178, and glutamine 182 each bind dCTP. The active-site Proton donor/acceptor is the glutamate 138. A disordered region spans residues arginine 169 to aspartate 193.

This sequence belongs to the dCTP deaminase family. As to quaternary structure, homotrimer.

It carries out the reaction dCTP + H2O + H(+) = dUTP + NH4(+). It participates in pyrimidine metabolism; dUMP biosynthesis; dUMP from dCTP (dUTP route): step 1/2. Its function is as follows. Catalyzes the deamination of dCTP to dUTP. This is dCTP deaminase from Escherichia coli O8 (strain IAI1).